The following is a 191-amino-acid chain: Peptidyl-tRNA hydrolase (191 aa).

A tRNA-binding site is contributed by Tyr14. His19 acts as the Proton acceptor in catalysis. Phe64, Asn66, and Asn112 together coordinate tRNA.

It belongs to the PTH family. In terms of assembly, monomer.

The protein localises to the cytoplasm. It catalyses the reaction an N-acyl-L-alpha-aminoacyl-tRNA + H2O = an N-acyl-L-amino acid + a tRNA + H(+). Its function is as follows. Hydrolyzes ribosome-free peptidyl-tRNAs (with 1 or more amino acids incorporated), which drop off the ribosome during protein synthesis, or as a result of ribosome stalling. In terms of biological role, catalyzes the release of premature peptidyl moieties from peptidyl-tRNA molecules trapped in stalled 50S ribosomal subunits, and thus maintains levels of free tRNAs and 50S ribosomes. The polypeptide is Peptidyl-tRNA hydrolase (Novosphingobium aromaticivorans (strain ATCC 700278 / DSM 12444 / CCUG 56034 / CIP 105152 / NBRC 16084 / F199)).